Reading from the N-terminus, the 183-residue chain is Segregation and condensation protein B (183 aa).

This sequence belongs to the ScpB family. In terms of assembly, homodimer. Homodimerization may be required to stabilize the binding of ScpA to the Smc head domains. Component of a cohesin-like complex composed of ScpA, ScpB and the Smc homodimer, in which ScpA and ScpB bind to the head domain of Smc. The presence of the three proteins is required for the association of the complex with DNA.

It is found in the cytoplasm. Its function is as follows. Participates in chromosomal partition during cell division. May act via the formation of a condensin-like complex containing Smc and ScpA that pull DNA away from mid-cell into both cell halves. This Streptococcus pyogenes serotype M12 (strain MGAS2096) protein is Segregation and condensation protein B.